The sequence spans 323 residues: Staphylococcal-like nuclease CAN1 (323 aa).

Glycine 2 is lipidated: N-myristoyl glycine. Residue cysteine 11 is the site of S-palmitoyl cysteine attachment. Residues 130-306 enclose the TNase-like domain; that stretch reads NTLPVDTKSV…RQKRVGLWAS (177 aa). Aspartate 143 is a Ca(2+) binding site. Arginine 213 is a catalytic residue. Aspartate 218 provides a ligand contact to Ca(2+). Residues glutamate 221 and arginine 255 contribute to the active site.

Belongs to the thermonuclease family. Requires Ca(2+) as cofactor.

It is found in the cell membrane. Its activity is regulated as follows. Inhibited by Zn(2+). Functionally, enzyme that catalyzes the hydrolysis of both DNA and RNA at the 5' position of the phosphodiester bond. Possesses activity toward the single-stranded DNA, double-stranded DNA and RNA. May be involved in genomic DNA degradation during programmed cell death. The protein is Staphylococcal-like nuclease CAN1 (CAN1) of Arabidopsis thaliana (Mouse-ear cress).